Here is a 1217-residue protein sequence, read N- to C-terminus: ATP-dependent helicase/nuclease subunit A (1217 aa).

One can recognise a UvrD-like helicase ATP-binding domain in the interval 10–475 (VIWTDAQWQS…IDLSQNFRSR (466 aa)). An ATP-binding site is contributed by 31–38 (AAAGSGKT). The UvrD-like helicase C-terminal domain maps to 476-786 (KEVLSTTNYI…RMMTIHSSKG (311 aa)).

This sequence belongs to the helicase family. AddA subfamily. In terms of assembly, heterodimer of AddA and AddB/RexB. The cofactor is Mg(2+).

The enzyme catalyses Couples ATP hydrolysis with the unwinding of duplex DNA by translocating in the 3'-5' direction.. It catalyses the reaction ATP + H2O = ADP + phosphate + H(+). The heterodimer acts as both an ATP-dependent DNA helicase and an ATP-dependent, dual-direction single-stranded exonuclease. Recognizes the chi site generating a DNA molecule suitable for the initiation of homologous recombination. The AddA nuclease domain is required for chi fragment generation; this subunit has the helicase and 3' -&gt; 5' nuclease activities. This is ATP-dependent helicase/nuclease subunit A from Staphylococcus aureus (strain MSSA476).